We begin with the raw amino-acid sequence, 479 residues long: Aspartyl/glutamyl-tRNA(Asn/Gln) amidotransferase subunit B (479 aa).

Belongs to the GatB/GatE family. GatB subfamily. As to quaternary structure, heterotrimer of A, B and C subunits.

The enzyme catalyses L-glutamyl-tRNA(Gln) + L-glutamine + ATP + H2O = L-glutaminyl-tRNA(Gln) + L-glutamate + ADP + phosphate + H(+). It catalyses the reaction L-aspartyl-tRNA(Asn) + L-glutamine + ATP + H2O = L-asparaginyl-tRNA(Asn) + L-glutamate + ADP + phosphate + 2 H(+). Functionally, allows the formation of correctly charged Asn-tRNA(Asn) or Gln-tRNA(Gln) through the transamidation of misacylated Asp-tRNA(Asn) or Glu-tRNA(Gln) in organisms which lack either or both of asparaginyl-tRNA or glutaminyl-tRNA synthetases. The reaction takes place in the presence of glutamine and ATP through an activated phospho-Asp-tRNA(Asn) or phospho-Glu-tRNA(Gln). The polypeptide is Aspartyl/glutamyl-tRNA(Asn/Gln) amidotransferase subunit B (Mesoplasma florum (strain ATCC 33453 / NBRC 100688 / NCTC 11704 / L1) (Acholeplasma florum)).